A 201-amino-acid chain; its full sequence is uncharacterized protein (201 aa).

Residues 1–28 (MMTFKNLRYGLSSSVVLAASLFSVLSYA) form the signal peptide.

The protein belongs to the fimbrial protein family.

Its subcellular location is the fimbrium. Its function is as follows. Part of the yadCKLM-htrE-yadVN fimbrial operon. Could contribute to adhesion to various surfaces in specific environmental niches. This is an uncharacterized protein from Escherichia coli (strain K12).